A 367-amino-acid polypeptide reads, in one-letter code: Aminomethyltransferase (367 aa).

The protein belongs to the GcvT family. The glycine cleavage system is composed of four proteins: P, T, L and H.

It catalyses the reaction N(6)-[(R)-S(8)-aminomethyldihydrolipoyl]-L-lysyl-[protein] + (6S)-5,6,7,8-tetrahydrofolate = N(6)-[(R)-dihydrolipoyl]-L-lysyl-[protein] + (6R)-5,10-methylene-5,6,7,8-tetrahydrofolate + NH4(+). Functionally, the glycine cleavage system catalyzes the degradation of glycine. The sequence is that of Aminomethyltransferase from Mycolicibacterium paratuberculosis (strain ATCC BAA-968 / K-10) (Mycobacterium paratuberculosis).